A 567-amino-acid polypeptide reads, in one-letter code: Proline--tRNA ligase (567 aa).

It belongs to the class-II aminoacyl-tRNA synthetase family. ProS type 1 subfamily. In terms of assembly, homodimer.

It localises to the cytoplasm. It carries out the reaction tRNA(Pro) + L-proline + ATP = L-prolyl-tRNA(Pro) + AMP + diphosphate. Functionally, catalyzes the attachment of proline to tRNA(Pro) in a two-step reaction: proline is first activated by ATP to form Pro-AMP and then transferred to the acceptor end of tRNA(Pro). As ProRS can inadvertently accommodate and process non-cognate amino acids such as alanine and cysteine, to avoid such errors it has two additional distinct editing activities against alanine. One activity is designated as 'pretransfer' editing and involves the tRNA(Pro)-independent hydrolysis of activated Ala-AMP. The other activity is designated 'posttransfer' editing and involves deacylation of mischarged Ala-tRNA(Pro). The misacylated Cys-tRNA(Pro) is not edited by ProRS. The protein is Proline--tRNA ligase of Campylobacter curvus (strain 525.92).